The following is a 72-amino-acid chain: MSFYTVVATFLSVVLASAVFWVLAPKENQTVWRSTIILSMSMMFLMWAVTYLSQLHPLVVPRRSDLRPEFAE.

Over 1–2 the chain is Lumenal; the sequence is MS. Residues 3–23 traverse the membrane as a helical segment; it reads FYTVVATFLSVVLASAVFWVL. Over 24 to 34 the chain is Cytoplasmic; sequence APKENQTVWRS. The chain crosses the membrane as a helical span at residues 35-55; that stretch reads TIILSMSMMFLMWAVTYLSQL. Topologically, residues 56–72 are lumenal; the sequence is HPLVVPRRSDLRPEFAE.

It belongs to the V-ATPase e1/e2 subunit family. As to quaternary structure, V-ATPase is a heteromultimeric enzyme composed of a peripheral catalytic V1 complex (components A to H) attached to an integral membrane V0 proton pore complex (components: a, c, c', c'', d, e, f and VOA1).

It is found in the vacuole membrane. In terms of biological role, subunit of the V0 complex of vacuolar(H+)-ATPase (V-ATPase), a multisubunit enzyme composed of a peripheral complex (V1) that hydrolyzes ATP and a membrane integral complex (V0) that translocates protons. V-ATPase is responsible for acidifying and maintaining the pH of intracellular compartments. This chain is V-type proton ATPase subunit e (VMA9), found in Eremothecium gossypii (strain ATCC 10895 / CBS 109.51 / FGSC 9923 / NRRL Y-1056) (Yeast).